Here is a 198-residue protein sequence, read N- to C-terminus: FMN-dependent NADH:quinone oxidoreductase (198 aa).

92-95 (MWNL) contributes to the FMN binding site.

This sequence belongs to the azoreductase type 1 family. Homodimer. The cofactor is FMN.

It catalyses the reaction 2 a quinone + NADH + H(+) = 2 a 1,4-benzosemiquinone + NAD(+). The catalysed reaction is N,N-dimethyl-1,4-phenylenediamine + anthranilate + 2 NAD(+) = 2-(4-dimethylaminophenyl)diazenylbenzoate + 2 NADH + 2 H(+). Functionally, quinone reductase that provides resistance to thiol-specific stress caused by electrophilic quinones. Also exhibits azoreductase activity. Catalyzes the reductive cleavage of the azo bond in aromatic azo compounds to the corresponding amines. In Clostridium beijerinckii (strain ATCC 51743 / NCIMB 8052) (Clostridium acetobutylicum), this protein is FMN-dependent NADH:quinone oxidoreductase.